A 209-amino-acid chain; its full sequence is Uracil phosphoribosyltransferase (209 aa).

5-phospho-alpha-D-ribose 1-diphosphate-binding positions include R79, R104, and 131–139 (DPMLATGNS). Uracil contacts are provided by residues I194 and 199–201 (GDA). D200 provides a ligand contact to 5-phospho-alpha-D-ribose 1-diphosphate.

This sequence belongs to the UPRTase family. Mg(2+) serves as cofactor.

It catalyses the reaction UMP + diphosphate = 5-phospho-alpha-D-ribose 1-diphosphate + uracil. The protein operates within pyrimidine metabolism; UMP biosynthesis via salvage pathway; UMP from uracil: step 1/1. Allosterically activated by GTP. In terms of biological role, catalyzes the conversion of uracil and 5-phospho-alpha-D-ribose 1-diphosphate (PRPP) to UMP and diphosphate. This is Uracil phosphoribosyltransferase from Rhizobium rhizogenes (strain K84 / ATCC BAA-868) (Agrobacterium radiobacter).